Reading from the N-terminus, the 273-residue chain is Zinc finger protein 80 (273 aa).

The C2H2-type 1 zinc finger occupies 49–71 (YKCKECGSVFNKNSLLVRHQQIH). The segment at 77–99 (YEYQECGKAFPEKVDFVRHMRIH) adopts a C2H2-type 2; degenerate zinc-finger fold. The segment at 105 to 127 (CKCVECRKVFNRRSHLLCYRQIH) adopts a C2H2-type 3; atypical zinc-finger fold. 4 C2H2-type zinc fingers span residues 133–155 (YECS…RVTH), 161–183 (FGCK…MKIH), 187–211 (KPCK…SMTH), and 217–239 (YECK…TRSH).

The protein belongs to the krueppel C2H2-type zinc-finger protein family.

It is found in the nucleus. Its function is as follows. May be involved in transcriptional regulation. This is Zinc finger protein 80 (ZNF80) from Pan troglodytes (Chimpanzee).